A 203-amino-acid chain; its full sequence is Holliday junction branch migration complex subunit RuvA (203 aa).

Residues 1 to 64 (MIGRLRGIIL…EDAQLLYGFN (64 aa)) are domain I. The segment at 65–142 (NKQERTLFKE…KGLHGDLFTP (78 aa)) is domain II. The tract at residues 143–154 (AVDLVLTSPASP) is flexible linker. Positions 155–203 (GSEDAEQEAVAALVALGYKPQEASRMVSKIARPDASSETLIRDALRAAL) are domain III.

The protein belongs to the RuvA family. Homotetramer. Forms an RuvA(8)-RuvB(12)-Holliday junction (HJ) complex. HJ DNA is sandwiched between 2 RuvA tetramers; dsDNA enters through RuvA and exits via RuvB. An RuvB hexamer assembles on each DNA strand where it exits the tetramer. Each RuvB hexamer is contacted by two RuvA subunits (via domain III) on 2 adjacent RuvB subunits; this complex drives branch migration. In the full resolvosome a probable DNA-RuvA(4)-RuvB(12)-RuvC(2) complex forms which resolves the HJ.

The protein resides in the cytoplasm. The RuvA-RuvB-RuvC complex processes Holliday junction (HJ) DNA during genetic recombination and DNA repair, while the RuvA-RuvB complex plays an important role in the rescue of blocked DNA replication forks via replication fork reversal (RFR). RuvA specifically binds to HJ cruciform DNA, conferring on it an open structure. The RuvB hexamer acts as an ATP-dependent pump, pulling dsDNA into and through the RuvAB complex. HJ branch migration allows RuvC to scan DNA until it finds its consensus sequence, where it cleaves and resolves the cruciform DNA. The chain is Holliday junction branch migration complex subunit RuvA from Salmonella schwarzengrund (strain CVM19633).